Here is a 569-residue protein sequence, read N- to C-terminus: Arginine--tRNA ligase (569 aa).

A 'HIGH' region motif is present at residues 128 to 138 (ANPTGPLHVGH).

Belongs to the class-I aminoacyl-tRNA synthetase family. As to quaternary structure, monomer.

The protein resides in the cytoplasm. It carries out the reaction tRNA(Arg) + L-arginine + ATP = L-arginyl-tRNA(Arg) + AMP + diphosphate. This chain is Arginine--tRNA ligase, found in Paracidovorax citrulli (strain AAC00-1) (Acidovorax citrulli).